The primary structure comprises 492 residues: Cytochrome P450 26A1 (492 aa).

Cys-438 contributes to the heme binding site.

Belongs to the cytochrome P450 family. Requires heme as cofactor.

The protein localises to the endoplasmic reticulum membrane. The protein resides in the microsome membrane. The enzyme catalyses all-trans-retinoate + reduced [NADPH--hemoprotein reductase] + O2 = all-trans-(4S)-hydroxyretinoate + oxidized [NADPH--hemoprotein reductase] + H2O + H(+). Its function is as follows. A cytochrome P450 monooxygenase involved in the metabolism of all-trans retinoic acid (atRA), a signaling molecule that binds to retinoic acid receptors and regulates gene transcription. Mechanistically, uses molecular oxygen inserting one oxygen atom into a substrate, and reducing the second into a water molecule, with two electrons provided by NADPH via cytochrome P450 reductase (CPR; NADPH-ferrihemoprotein reductase). Catalyzes the hydroxylation of carbon hydrogen bonds of atRA primarily at C-4. Has no activity toward 9-cis and 13-cis retinoic acid stereoisomers. May play a role in the oxidative metabolism of xenobiotics such as tazarotenic acid. This chain is Cytochrome P450 26A1 (cyp26a1), found in Danio rerio (Zebrafish).